A 165-amino-acid polypeptide reads, in one-letter code: MVVAVYPGTFDPLTRGHEDLVRRASSIFDTLVVGVADSRAKKPFFSLEERLTIANEVLGHYPNVKVMSFTGLLKDFVRTNNARVIVRGLRAVSDFEYEFQMAGMNRYLLPDVETMFMTPSDQYQFISGTIVREIAQLGGDVSKFVFPSVEKWLTEKVAAMGGPVA.

A substrate-binding site is contributed by T9. Residues 9 to 10 and H17 contribute to the ATP site; that span reads TF. Substrate contacts are provided by K41, L73, and R87. Residues 88–90, E98, and 123–129 contribute to the ATP site; these read GLR and YQFISGT.

Belongs to the bacterial CoaD family. As to quaternary structure, homohexamer. Requires Mg(2+) as cofactor.

The protein localises to the cytoplasm. It catalyses the reaction (R)-4'-phosphopantetheine + ATP + H(+) = 3'-dephospho-CoA + diphosphate. It functions in the pathway cofactor biosynthesis; coenzyme A biosynthesis; CoA from (R)-pantothenate: step 4/5. In terms of biological role, reversibly transfers an adenylyl group from ATP to 4'-phosphopantetheine, yielding dephospho-CoA (dPCoA) and pyrophosphate. In Burkholderia lata (strain ATCC 17760 / DSM 23089 / LMG 22485 / NCIMB 9086 / R18194 / 383), this protein is Phosphopantetheine adenylyltransferase.